The chain runs to 226 residues: PKHD-type hydroxylase Plav_0377 (226 aa).

One can recognise a Fe2OG dioxygenase domain in the interval 78 to 178 (KVLPPRFNRY…RLASFFWVQS (101 aa)). Fe cation is bound by residues histidine 96, aspartate 98, and histidine 159. Arginine 169 lines the 2-oxoglutarate pocket.

Requires Fe(2+) as cofactor. L-ascorbate serves as cofactor.

This chain is PKHD-type hydroxylase Plav_0377, found in Parvibaculum lavamentivorans (strain DS-1 / DSM 13023 / NCIMB 13966).